The following is a 334-amino-acid chain: UstYa family oxidase aprY (334 aa).

The chain crosses the membrane as a helical span at residues 55 to 75; sequence IWILLTITNLIILGITVSMIV. Asparagine 112 carries an N-linked (GlcNAc...) asparagine glycan. The HXXHC 1 motif lies at 185 to 189; sequence HQIHC. N-linked (GlcNAc...) asparagine glycosylation occurs at asparagine 214. Residues 223–227 carry the HXXHC 2 motif; it reads HLGHC. Residues 306 to 318 are compositionally biased toward basic and acidic residues; that stretch reads SELGEKLGKHQKQ. The segment at 306–334 is disordered; the sequence is SELGEKLGKHQKQEGVLGQAGHQHTKRHE.

Belongs to the ustYa family.

It localises to the membrane. It participates in secondary metabolite biosynthesis. In terms of biological role, ustYa family oxidase; part of the gene cluster that mediates the biosynthesis of the asperipin-2a, a bicyclic peptide that possesses two macrocyclic ether rings consisting of 14- and 17-membered paracyclophans. Within the pathway, aprY is responsible for the synthesis of the bicyclic structure of asperipin-2a. The pathway starts with the processing of the precursor aprA by kexin proteases to produce 11 identical copies of the hexapeptide Phe-Tyr-Tyr-Thr-Gly-Tyr. Macrocyclization of asperipin-2a may accompany an alpha-hydroxylation-dehydration sequence to give an imine, which is readily hydrolyzed to yield putative ketone intermediate. The reductase aprR may be required for the final reduction to yield asperipin-2a. This is UstYa family oxidase aprY from Aspergillus flavus (strain ATCC 200026 / FGSC A1120 / IAM 13836 / NRRL 3357 / JCM 12722 / SRRC 167).